The chain runs to 88 residues: Large ribosomal subunit protein eL34 (88 aa).

Belongs to the eukaryotic ribosomal protein eL34 family.

This Saccharolobus solfataricus (strain ATCC 35092 / DSM 1617 / JCM 11322 / P2) (Sulfolobus solfataricus) protein is Large ribosomal subunit protein eL34.